The primary structure comprises 485 residues: tRNA sulfurtransferase (485 aa).

The THUMP domain occupies 61–165 (EELIALLQRI…DDKMMLVKAR (105 aa)). ATP-binding positions include 183 to 184 (LI), K265, G287, and Q296. C344 and C456 are oxidised to a cystine. Positions 404–483 (LSENEVILDI…FSNVRVFAKK (80 aa)) constitute a Rhodanese domain. The active-site Cysteine persulfide intermediate is C456.

It belongs to the ThiI family.

The protein resides in the cytoplasm. The enzyme catalyses [ThiI sulfur-carrier protein]-S-sulfanyl-L-cysteine + a uridine in tRNA + 2 reduced [2Fe-2S]-[ferredoxin] + ATP + H(+) = [ThiI sulfur-carrier protein]-L-cysteine + a 4-thiouridine in tRNA + 2 oxidized [2Fe-2S]-[ferredoxin] + AMP + diphosphate. It carries out the reaction [ThiS sulfur-carrier protein]-C-terminal Gly-Gly-AMP + S-sulfanyl-L-cysteinyl-[cysteine desulfurase] + AH2 = [ThiS sulfur-carrier protein]-C-terminal-Gly-aminoethanethioate + L-cysteinyl-[cysteine desulfurase] + A + AMP + 2 H(+). Its pathway is cofactor biosynthesis; thiamine diphosphate biosynthesis. Functionally, catalyzes the ATP-dependent transfer of a sulfur to tRNA to produce 4-thiouridine in position 8 of tRNAs, which functions as a near-UV photosensor. Also catalyzes the transfer of sulfur to the sulfur carrier protein ThiS, forming ThiS-thiocarboxylate. This is a step in the synthesis of thiazole, in the thiamine biosynthesis pathway. The sulfur is donated as persulfide by IscS. This Haemophilus influenzae (strain PittEE) protein is tRNA sulfurtransferase.